The following is a 124-amino-acid chain: MALSKDDILNAIAEMSVMDVVALVEAMEEKFGVSAAAAVAVAAAPAADAAAVEEKTEFDVVLQSAGEKKVNVIKVVRGITGLGLKEAKDLVDGAPSTVKEALSKDDAEKAKKELEEAGATVELK.

Positions 101 to 115 (ALSKDDAEKAKKELE) are enriched in basic and acidic residues. The segment at 101–124 (ALSKDDAEKAKKELEEAGATVELK) is disordered.

The protein belongs to the bacterial ribosomal protein bL12 family. In terms of assembly, homodimer. Part of the ribosomal stalk of the 50S ribosomal subunit. Forms a multimeric L10(L12)X complex, where L10 forms an elongated spine to which 2 to 4 L12 dimers bind in a sequential fashion. Binds GTP-bound translation factors.

Forms part of the ribosomal stalk which helps the ribosome interact with GTP-bound translation factors. Is thus essential for accurate translation. The sequence is that of Large ribosomal subunit protein bL12 from Hahella chejuensis (strain KCTC 2396).